The following is a 183-amino-acid chain: Guanylate kinase (183 aa).

Residues 4–182 (GRVVVLTGPS…AITALEAAIF (179 aa)) form the Guanylate kinase-like domain. 11-18 (GPSGVGKG) lines the ATP pocket.

Belongs to the guanylate kinase family.

It is found in the cytoplasm. It catalyses the reaction GMP + ATP = GDP + ADP. It carries out the reaction dZMP + ATP = dZDP + ADP. It functions in the pathway purine metabolism. Essential for recycling GMP and indirectly, cGMP. In terms of biological role, (Microbial infection) Catalyzes the phosphorylation of dZMP to dZDP, when the bacterium is infected by a phage that produces the substrate for the synthesis of dZTP (2- amino-2'-deoxyadenosine 5'-triphosphate), which is then used by the phage as a DNA polymerase substrate. The sequence is that of Guanylate kinase from Synechococcus elongatus (strain ATCC 33912 / PCC 7942 / FACHB-805) (Anacystis nidulans R2).